A 515-amino-acid chain; its full sequence is MPTVVVMDVSLSMTRPVSVEGSEEYQRKHLAAHGLTMLFEHMATNYKLEFTALVVFSSLWELMVPFTRDYNTLQEALSNMDDYDKTCLESALVGVCNIVQQEWGGAIPCQVVLVTDGCLGIGRGSLRHSLATQNQRSESNRFPLPFPFPSKLYVMCMANLEELQSTDSLECLERLIDLNNGEGQIFTIDGPLCLKNVQSMFGKLIDLAYTPFHAVLKCGHLTADVQVFPRPEPFVIDEEIDPIPKVINTDLEIVGFIDIADISSPPVLSRHLVLPIALNKEGDEVGAGITDDNEDENSANQIAGKIPNFCVLLHGSLKVEGMVALVQLGPEWHGMLYSQADSKKKSNLMMSLFEPGPEPLPWLGKMAQLGPISDAKENPYGEDDNKSPFPLQPKNKRSYAQNVTVWIKPSGLQTDVQKILRNARKLPEKTQTFYKELNRLRKAALAFGFLDLLKGVADMLERECTLLPDTAHPDAAFQLTHAAQQLKLASTEYAIYDHNITPLHTDFSGSSTERM.

Residues 2–204 (PTVVVMDVSL…KNVQSMFGKL (203 aa)) enclose the VWFA domain. Residues Ser10, Ser12, and Thr86 each contribute to the Mg(2+) site. Lys418 carries the post-translational modification N6-acetyllysine.

It belongs to the Integrator subunit 14 family. In terms of assembly, component of the Integrator complex, composed of core subunits INTS1, INTS2, INTS3, INTS4, INTS5, INTS6, INTS7, INTS8, INTS9/RC74, INTS10, INTS11/CPSF3L, INTS12, INTS13, INTS14 and INTS15. The core complex associates with protein phosphatase 2A subunits PPP2CA and PPP2R1A, to form the Integrator-PP2A (INTAC) complex. INTS14 is part of the tail subcomplex, composed of INTS10, INTS13, INTS14 and INTS15.

It localises to the nucleus. Component of the integrator complex, a multiprotein complex that terminates RNA polymerase II (Pol II) transcription in the promoter-proximal region of genes. The integrator complex provides a quality checkpoint during transcription elongation by driving premature transcription termination of transcripts that are unfavorably configured for transcriptional elongation: the complex terminates transcription by (1) catalyzing dephosphorylation of the C-terminal domain (CTD) of Pol II subunit POLR2A/RPB1 and SUPT5H/SPT5, (2) degrading the exiting nascent RNA transcript via endonuclease activity and (3) promoting the release of Pol II from bound DNA. The integrator complex is also involved in terminating the synthesis of non-coding Pol II transcripts, such as enhancer RNAs (eRNAs), small nuclear RNAs (snRNAs), telomerase RNAs and long non-coding RNAs (lncRNAs). Within the integrator complex, INTS14 is part of the integrator tail module that acts as a platform for the recruitment of transcription factors at promoters. The chain is Integrator complex subunit 14 from Mus musculus (Mouse).